Consider the following 352-residue polypeptide: Histidine biosynthesis bifunctional protein HisB (352 aa).

The interval 1–163 (MKKILFIDRD…MVASAIINDA (163 aa)) is histidinol-phosphatase. D8 (nucleophile) is an active-site residue. Residues D8 and D10 each contribute to the Mg(2+) site. Catalysis depends on D10, which acts as the Proton donor. Zn(2+)-binding residues include C91, H93, C99, and C101. Residue D128 participates in Mg(2+) binding. The tract at residues 164 to 352 (RKASVQRKTK…NYLPSTKGVL (189 aa)) is imidazoleglycerol-phosphate dehydratase.

This sequence in the N-terminal section; belongs to the histidinol-phosphatase family. It in the C-terminal section; belongs to the imidazoleglycerol-phosphate dehydratase family. Mg(2+) serves as cofactor. It depends on Zn(2+) as a cofactor.

The protein localises to the cytoplasm. It carries out the reaction D-erythro-1-(imidazol-4-yl)glycerol 3-phosphate = 3-(imidazol-4-yl)-2-oxopropyl phosphate + H2O. The enzyme catalyses L-histidinol phosphate + H2O = L-histidinol + phosphate. It participates in amino-acid biosynthesis; L-histidine biosynthesis; L-histidine from 5-phospho-alpha-D-ribose 1-diphosphate: step 6/9. It functions in the pathway amino-acid biosynthesis; L-histidine biosynthesis; L-histidine from 5-phospho-alpha-D-ribose 1-diphosphate: step 8/9. In Legionella pneumophila subsp. pneumophila (strain Philadelphia 1 / ATCC 33152 / DSM 7513), this protein is Histidine biosynthesis bifunctional protein HisB.